A 433-amino-acid polypeptide reads, in one-letter code: Methylenetetrahydrofolate--tRNA-(uracil-5-)-methyltransferase TrmFO (433 aa).

7–12 (GGGLAG) contributes to the FAD binding site.

Belongs to the MnmG family. TrmFO subfamily. FAD is required as a cofactor.

The protein localises to the cytoplasm. It catalyses the reaction uridine(54) in tRNA + (6R)-5,10-methylene-5,6,7,8-tetrahydrofolate + NADH + H(+) = 5-methyluridine(54) in tRNA + (6S)-5,6,7,8-tetrahydrofolate + NAD(+). The enzyme catalyses uridine(54) in tRNA + (6R)-5,10-methylene-5,6,7,8-tetrahydrofolate + NADPH + H(+) = 5-methyluridine(54) in tRNA + (6S)-5,6,7,8-tetrahydrofolate + NADP(+). Its function is as follows. Catalyzes the folate-dependent formation of 5-methyl-uridine at position 54 (M-5-U54) in all tRNAs. This is Methylenetetrahydrofolate--tRNA-(uracil-5-)-methyltransferase TrmFO from Natranaerobius thermophilus (strain ATCC BAA-1301 / DSM 18059 / JW/NM-WN-LF).